Here is a 367-residue protein sequence, read N- to C-terminus: Pyrimidine monooxygenase RutA (367 aa).

FMN-binding positions include 49–50 (IK), Asn-115, Glu-124, 140–141 (RY), and Ser-190.

This sequence belongs to the NtaA/SnaA/DszA monooxygenase family. RutA subfamily.

The enzyme catalyses uracil + FMNH2 + NADH + O2 = (Z)-3-ureidoacrylate + FMN + NAD(+) + H2O + H(+). It catalyses the reaction thymine + FMNH2 + NADH + O2 = (Z)-2-methylureidoacrylate + FMN + NAD(+) + H2O + H(+). Catalyzes the pyrimidine ring opening between N-3 and C-4 by an unusual flavin hydroperoxide-catalyzed mechanism, adding oxygen atoms in the process to yield ureidoacrylate peracid, that immediately reacts with FMN forming ureidoacrylate and FMN-N(5)-oxide. The FMN-N(5)-oxide reacts spontaneously with NADH to produce FMN. Requires the flavin reductase RutF to regenerate FMN in vivo. This Yersinia enterocolitica serotype O:8 / biotype 1B (strain NCTC 13174 / 8081) protein is Pyrimidine monooxygenase RutA.